Consider the following 546-residue polypeptide: Plastidic glucose transporter 4 (546 aa).

12 helical membrane-spanning segments follow: residues 105-125, 148-168, 182-202, 205-225, 240-260, 265-285, 345-365, 381-401, 410-430, 441-461, 477-497, and 503-523; these read VLPF…HLGV, WIVS…GALA, IPLA…TMIV, LLAG…ISEI, LFIC…AANP, TMFG…AFSP, VVSV…NAVV, VAAS…ASSL, LLLT…LSFT, LAVV…GPVP, AVAL…LYFL, and FGIS…VLYI.

This sequence belongs to the major facilitator superfamily. Sugar transporter (TC 2.A.1.1) family.

It localises to the plastid. Its subcellular location is the chloroplast inner membrane. In terms of biological role, may be involved in the efflux of glucose towards the cytosol. This is Plastidic glucose transporter 4 from Arabidopsis thaliana (Mouse-ear cress).